A 290-amino-acid polypeptide reads, in one-letter code: 4-hydroxy-tetrahydrodipicolinate synthase (290 aa).

Residue T44 coordinates pyruvate. The active-site Proton donor/acceptor is Y132. Residue K160 is the Schiff-base intermediate with substrate of the active site. Residue I202 coordinates pyruvate.

Belongs to the DapA family. As to quaternary structure, homotetramer; dimer of dimers.

The protein resides in the cytoplasm. It catalyses the reaction L-aspartate 4-semialdehyde + pyruvate = (2S,4S)-4-hydroxy-2,3,4,5-tetrahydrodipicolinate + H2O + H(+). It participates in amino-acid biosynthesis; L-lysine biosynthesis via DAP pathway; (S)-tetrahydrodipicolinate from L-aspartate: step 3/4. Its function is as follows. Catalyzes the condensation of (S)-aspartate-beta-semialdehyde [(S)-ASA] and pyruvate to 4-hydroxy-tetrahydrodipicolinate (HTPA). The chain is 4-hydroxy-tetrahydrodipicolinate synthase from Alkaliphilus oremlandii (strain OhILAs) (Clostridium oremlandii (strain OhILAs)).